We begin with the raw amino-acid sequence, 219 residues long: Envelope protein US9 homolog (219 aa).

Topologically, residues 1–193 (MEKAEAAAVV…RHRRRRVALT (193 aa)) are intravirion. The Di-leucine internalization motif motif lies at 145–146 (LL). An acidic region spans residues 153 to 168 (DYDSESGCYYSESDNE). A phosphoserine; by host CK2 mark is found at Ser-163 and Ser-165. Residues 194–214 (VAGVILVVVLCAISGIVGAFL) traverse the membrane as a helical; Signal-anchor for type II membrane protein segment. Residues 215–219 (ARVFP) lie on the Virion surface side of the membrane.

The protein belongs to the alphaherpesvirinae envelope protein US9 family. Phosphorylated on serines within the acidic cluster. Phosphorylation determines whether endocytosed viral US9 traffics to the trans-Golgi network or recycles to the cell membrane.

Its subcellular location is the virion membrane. The protein resides in the host Golgi apparatus membrane. The protein localises to the host smooth endoplasmic reticulum membrane. It localises to the host cell membrane. In terms of biological role, essential for the anterograde spread of the infection throughout the host nervous system. Together with the gE/gI heterodimer, US9 is involved in the sorting and transport of viral structural components toward axon tips. In Equine herpesvirus 1 (strain Ab4p) (EHV-1), this protein is Envelope protein US9 homolog.